The chain runs to 200 residues: Mpv17-like protein 2 (200 aa).

Helical transmembrane passes span Ala24–Gly40, Ala63–Leu83, and Val102–Gly122.

This sequence belongs to the peroxisomal membrane protein PXMP2/4 family. In terms of assembly, interacts with the large mitochondrial ribosomal subunit.

The protein localises to the membrane. Its subcellular location is the mitochondrion inner membrane. Required for the assembly and stability of the mitochondrial ribosome. Is a positive regulator of mitochondrial protein synthesis. The sequence is that of Mpv17-like protein 2 (Mpv17l2) from Mus musculus (Mouse).